Reading from the N-terminus, the 255-residue chain is Small ribosomal subunit protein eS1 (255 aa).

Basic residues predominate over residues 1–18 (MAVGKNKRLSKGKKGLKK). Residues 1–22 (MAVGKNKRLSKGKKGLKKRAQD) are disordered. Ala2 carries the post-translational modification N-acetylalanine; partial.

Belongs to the eukaryotic ribosomal protein eS1 family. Component of the small ribosomal subunit. Mature ribosomes consist of a small (40S) and a large (60S) subunit. The 40S subunit contains about 33 different proteins and 1 molecule of RNA (18S). The 60S subunit contains about 49 different proteins and 3 molecules of RNA (25S, 5.8S and 5S).

The protein localises to the cytoplasm. The protein is Small ribosomal subunit protein eS1 of Uncinocarpus reesii (strain UAMH 1704).